A 443-amino-acid chain; its full sequence is Deoxyguanosinetriphosphate triphosphohydrolase-like protein (443 aa).

The HD domain occupies 61–246 (RLTHSLEVAC…MEAADDICYG (186 aa)).

This sequence belongs to the dGTPase family. Type 3 subfamily.

The chain is Deoxyguanosinetriphosphate triphosphohydrolase-like protein from Pseudomonas aeruginosa (strain LESB58).